The sequence spans 385 residues: Acetate kinase (385 aa).

Mg(2+) is bound at residue N9. K16 contacts ATP. R87 contacts substrate. Residue D144 is the Proton donor/acceptor of the active site. ATP-binding positions include 202–206 and 277–279; these read HLGSG and DMR. E373 lines the Mg(2+) pocket.

It belongs to the acetokinase family. Homodimer. The cofactor is Mg(2+). Requires Mn(2+) as cofactor.

It localises to the cytoplasm. The catalysed reaction is acetate + ATP = acetyl phosphate + ADP. The protein operates within metabolic intermediate biosynthesis; acetyl-CoA biosynthesis; acetyl-CoA from acetate: step 1/2. Functionally, catalyzes the formation of acetyl phosphate from acetate and ATP. Can also catalyze the reverse reaction. This chain is Acetate kinase, found in Rickettsia felis (strain ATCC VR-1525 / URRWXCal2) (Rickettsia azadi).